Reading from the N-terminus, the 328-residue chain is Ubiquitin carboxyl-terminal hydrolase isozyme L5 (328 aa).

A UCH catalytic domain is found at 7–225 (EWCLMESDPG…IRFNLMAIVS (219 aa)). Lys47 bears the N6-succinyllysine mark. The active-site Nucleophile is Cys88. At Lys158 the chain carries N6-acetyllysine. Residue His164 is the Proton donor of the active site. Residue Lys288 is modified to N6-succinyllysine. Positions 290 to 318 (NYLPFIMELLKTLAEHQQLIPLVEKAKEK) constitute a ULD domain. Residues 312–328 (VEKAKEKQNAKKAQETK) are interaction with ADRM1.

Belongs to the peptidase C12 family. In terms of assembly, component of the 19S (PA700) regulatory complex of the 26S proteasome. Interacts with ADRM1 and NFRKB. Component of the INO80 complex; specifically part of a complex module associated with N-terminus of INO80.

The protein resides in the cytoplasm. It localises to the nucleus. The enzyme catalyses Thiol-dependent hydrolysis of ester, thioester, amide, peptide and isopeptide bonds formed by the C-terminal Gly of ubiquitin (a 76-residue protein attached to proteins as an intracellular targeting signal).. With respect to regulation, activated by ADRM1. Inhibited by interaction with NFRKB. In terms of biological role, protease that specifically cleaves 'Lys-48'-linked polyubiquitin chains. Deubiquitinating enzyme associated with the 19S regulatory subunit of the 26S proteasome. Putative regulatory component of the INO80 complex; however is inactive in the INO80 complex and is activated by a transient interaction of the INO80 complex with the proteasome via ADRM1. The sequence is that of Ubiquitin carboxyl-terminal hydrolase isozyme L5 (UCHL5) from Bos taurus (Bovine).